A 577-amino-acid chain; its full sequence is 2-succinyl-5-enolpyruvyl-6-hydroxy-3-cyclohexene-1-carboxylate synthase (577 aa).

Belongs to the TPP enzyme family. MenD subfamily. As to quaternary structure, homodimer. Mg(2+) is required as a cofactor. Mn(2+) serves as cofactor. Requires thiamine diphosphate as cofactor.

The enzyme catalyses isochorismate + 2-oxoglutarate + H(+) = 5-enolpyruvoyl-6-hydroxy-2-succinyl-cyclohex-3-ene-1-carboxylate + CO2. It participates in quinol/quinone metabolism; 1,4-dihydroxy-2-naphthoate biosynthesis; 1,4-dihydroxy-2-naphthoate from chorismate: step 2/7. Its pathway is quinol/quinone metabolism; menaquinone biosynthesis. Its function is as follows. Catalyzes the thiamine diphosphate-dependent decarboxylation of 2-oxoglutarate and the subsequent addition of the resulting succinic semialdehyde-thiamine pyrophosphate anion to isochorismate to yield 2-succinyl-5-enolpyruvyl-6-hydroxy-3-cyclohexene-1-carboxylate (SEPHCHC). This chain is 2-succinyl-5-enolpyruvyl-6-hydroxy-3-cyclohexene-1-carboxylate synthase, found in Geobacillus kaustophilus (strain HTA426).